The primary structure comprises 338 residues: Glyceraldehyde-3-phosphate dehydrogenase (338 aa).

Residues 11-12 and G111 contribute to the NAD(+) site; that span reads TI. Residue 140–142 participates in D-glyceraldehyde 3-phosphate binding; it reads SCN. C141 functions as the Nucleophile in the catalytic mechanism. R169 is an NAD(+) binding site. The disordered stretch occupies residues 170 to 195; sequence GSDPSEVKKGPINSIVPNPPKVPSHH. D-glyceraldehyde 3-phosphate is bound at residue 195–196; that stretch reads HG. Residue Q302 coordinates NAD(+).

It belongs to the glyceraldehyde-3-phosphate dehydrogenase family. As to quaternary structure, homotetramer.

Its subcellular location is the cytoplasm. The catalysed reaction is D-glyceraldehyde 3-phosphate + phosphate + NADP(+) = (2R)-3-phospho-glyceroyl phosphate + NADPH + H(+). It catalyses the reaction D-glyceraldehyde 3-phosphate + phosphate + NAD(+) = (2R)-3-phospho-glyceroyl phosphate + NADH + H(+). It participates in carbohydrate degradation; glycolysis; pyruvate from D-glyceraldehyde 3-phosphate: step 1/5. The sequence is that of Glyceraldehyde-3-phosphate dehydrogenase from Methanobrevibacter smithii (strain ATCC 35061 / DSM 861 / OCM 144 / PS).